The following is a 247-amino-acid chain: Coproheme decarboxylase (247 aa).

Fe-coproporphyrin III-binding positions include R129, 143 to 147, H170, Q183, and S221; that span reads YPMDK. The active site involves Y143.

This sequence belongs to the ChdC family. Type 1 subfamily. It depends on Fe-coproporphyrin III as a cofactor.

It carries out the reaction Fe-coproporphyrin III + 2 H2O2 + 2 H(+) = heme b + 2 CO2 + 4 H2O. The enzyme catalyses Fe-coproporphyrin III + H2O2 + H(+) = harderoheme III + CO2 + 2 H2O. It catalyses the reaction harderoheme III + H2O2 + H(+) = heme b + CO2 + 2 H2O. It participates in porphyrin-containing compound metabolism; protoheme biosynthesis. Functionally, involved in coproporphyrin-dependent heme b biosynthesis. Catalyzes the decarboxylation of Fe-coproporphyrin III (coproheme) to heme b (protoheme IX), the last step of the pathway. The reaction occurs in a stepwise manner with a three-propionate intermediate. This is Coproheme decarboxylase from Bacillus mycoides (strain KBAB4) (Bacillus weihenstephanensis).